A 434-amino-acid chain; its full sequence is Cytochrome b-c1 complex subunit 2, mitochondrial (434 aa).

Residues Met1–Gly31 constitute a mitochondrion transit peptide.

The protein belongs to the peptidase M16 family. UQCRC2/QCR2 subfamily. As to quaternary structure, component of the ubiquinol-cytochrome c oxidoreductase (cytochrome b-c1 complex, complex III, CIII), a multisubunit enzyme composed of 10 subunits. The complex is composed of 3 respiratory subunits cytochrome b (COB), cytochrome c1 (CYT1) and Rieske protein (RIP1), 2 core protein subunits COR1 and QCR2, and 5 low-molecular weight protein subunits QCR6, QCR7, QCR8, QCR9 and QCR10. The complex exists as an obligatory dimer and forms supercomplexes (SCs) in the inner mitochondrial membrane with a monomer or a dimer of cytochrome c oxidase (complex IV, CIV), resulting in 2 different assemblies (supercomplexes III(2)IV and III(2)IV(2)). Interacts with MRJ1.

It localises to the mitochondrion inner membrane. In terms of biological role, component of the ubiquinol-cytochrome c oxidoreductase, a multisubunit transmembrane complex that is part of the mitochondrial electron transport chain which drives oxidative phosphorylation. The respiratory chain contains 3 multisubunit complexes succinate dehydrogenase (complex II, CII), ubiquinol-cytochrome c oxidoreductase (cytochrome b-c1 complex, complex III, CIII) and cytochrome c oxidase (complex IV, CIV), that cooperate to transfer electrons derived from NADH and succinate to molecular oxygen, creating an electrochemical gradient over the inner membrane that drives transmembrane transport and the ATP synthase. The cytochrome b-c1 complex catalyzes electron transfer from ubiquinol to cytochrome c, linking this redox reaction to translocation of protons across the mitochondrial inner membrane, with protons being carried across the membrane as hydrogens on the quinol. In the process called Q cycle, 2 protons are consumed from the matrix, 4 protons are released into the intermembrane space and 2 electrons are passed to cytochrome c. The chain is Cytochrome b-c1 complex subunit 2, mitochondrial from Cryptococcus neoformans var. grubii serotype A (strain H99 / ATCC 208821 / CBS 10515 / FGSC 9487) (Filobasidiella neoformans var. grubii).